The sequence spans 431 residues: Salivary plasminogen activator beta (431 aa).

A signal peptide spans 1-36 (MVNTMKTKLLCVLLLCGAVFSLPRQETYRQLARGSR). Residues 37–75 (AYGGCSELRCFNGGTCWQAASFSDFVCQCPKGYTGKQCE) form the EGF-like domain. 12 cysteine pairs are disulfide-bonded: cysteine 41–cysteine 52, cysteine 46–cysteine 63, cysteine 65–cysteine 74, cysteine 82–cysteine 163, cysteine 103–cysteine 145, cysteine 134–cysteine 158, cysteine 168–cysteine 299, cysteine 211–cysteine 227, cysteine 219–cysteine 288, cysteine 313–cysteine 388, cysteine 345–cysteine 361, and cysteine 378–cysteine 406. The Kringle domain maps to 82–163 (CYKDQGVTYR…ILEFCSVPVC (82 aa)). Residue asparagine 139 is glycosylated (N-linked (GlcNAc...) asparagine). The region spanning 180–430 (STGGLFTDIT…YLGWIRDNMR (251 aa)) is the Peptidase S1 domain. Catalysis depends on charge relay system residues histidine 226 and aspartate 275. The N-linked (GlcNAc...) asparagine glycan is linked to asparagine 352. Serine 382 functions as the Charge relay system in the catalytic mechanism.

Belongs to the peptidase S1 family. Monomer.

It is found in the secreted. The enzyme catalyses Specific cleavage of Arg-|-Val bond in plasminogen to form plasmin.. Functionally, probably essential to support the feeding habits of this exclusively haematophagous animal. Probable potent thrombolytic agent. The sequence is that of Salivary plasminogen activator beta from Desmodus rotundus (Vampire bat).